Consider the following 207-residue polypeptide: Transcription antitermination protein NusB (207 aa).

Belongs to the NusB family.

Its function is as follows. Involved in transcription antitermination. Required for transcription of ribosomal RNA (rRNA) genes. Binds specifically to the boxA antiterminator sequence of the ribosomal RNA (rrn) operons. The polypeptide is Transcription antitermination protein NusB (Trichodesmium erythraeum (strain IMS101)).